Reading from the N-terminus, the 380-residue chain is Dynactin subunit 2 (380 aa).

Positions 1 to 32 (MADPKFQNLPGIAYDQPDVYETPDDPELDTSD) are disordered. Over residues 21–32 (ETPDDPELDTSD) the composition is skewed to acidic residues. Residues Ser-49, Ser-58, and Ser-86 each carry the phosphoserine modification. Coiled-coil stretches lie at residues 100 to 135 (VQKCQRLQIEMNELLNEVAALQVDRKVADEEKQSYD) and 353 to 377 (ETFAQNLETINSKVAKVEQRVAAIS).

Belongs to the dynactin subunit 2 family. As to quaternary structure, subunit of dynactin, a multiprotein complex associated with dynein.

The protein resides in the cytoplasm. The protein localises to the cytoskeleton. It is found in the membrane. Functionally, modulates cytoplasmic dynein binding to an organelle, and plays a role in prometaphase chromosome alignment and spindle organization during mitosis. May play a role in synapse formation during brain development. The chain is Dynactin subunit 2 from Drosophila melanogaster (Fruit fly).